A 393-amino-acid chain; its full sequence is GDSL esterase/lipase At1g28600 (393 aa).

Residues 1–22 form the signal peptide; it reads MASLDSLVIFLFSTLFVTIVSS. The active-site Nucleophile is the S38. Residues N133 and N317 are each glycosylated (N-linked (GlcNAc...) asparagine). Residues D340 and H343 contribute to the active site. An N-linked (GlcNAc...) asparagine glycan is attached at N382.

Belongs to the 'GDSL' lipolytic enzyme family.

Its subcellular location is the secreted. The polypeptide is GDSL esterase/lipase At1g28600 (Arabidopsis thaliana (Mouse-ear cress)).